A 571-amino-acid chain; its full sequence is Germacrene B synthase TPS16CC (571 aa).

(2E,6E)-farnesyl diphosphate is bound by residues Arg287, Asp324, Asp328, Arg465, and Asp468. Residues Asp324 and Asp328 each contribute to the Mg(2+) site. Residues 324–328 (DDIYD) carry the DDXXD motif motif. Residues Asp468, Ser472, and Glu476 each contribute to the Mg(2+) site.

This sequence belongs to the terpene synthase family. Tpsb subfamily. It depends on Mg(2+) as a cofactor. Mn(2+) is required as a cofactor. As to expression, highly expressed in glandular trichomes.

It carries out the reaction (2E,6E)-farnesyl diphosphate = (1E,4E)-germacrene B + diphosphate. It functions in the pathway secondary metabolite biosynthesis; terpenoid biosynthesis. Its function is as follows. Involved in sesquiterpene olefins biosynthesis, constituants of cannabinoids and terpenoids-rich resins. Catalyzes mainly the conversion of (2E)-farnesyl diphosphate to germacrene B, which is spontaneously converted to gamma-elemene as a thermal degradation product. The chain is Germacrene B synthase TPS16CC from Cannabis sativa (Hemp).